The sequence spans 118 residues: Large ribosomal subunit protein uL18 (118 aa).

The protein belongs to the universal ribosomal protein uL18 family. In terms of assembly, part of the 50S ribosomal subunit; part of the 5S rRNA/L5/L18/L25 subcomplex. Contacts the 5S and 23S rRNAs.

Its function is as follows. This is one of the proteins that bind and probably mediate the attachment of the 5S RNA into the large ribosomal subunit, where it forms part of the central protuberance. This is Large ribosomal subunit protein uL18 from Brachyspira hyodysenteriae (strain ATCC 49526 / WA1).